The sequence spans 132 residues: Fatty acid-binding protein, intestinal (132 aa).

At Ala2 the chain carries N-acetylalanine. Hexadecanoate is bound by residues Trp83 and Arg107. Trp83 and Arg107 together coordinate tetradecanoate.

The protein belongs to the calycin superfamily. Fatty-acid binding protein (FABP) family. In terms of tissue distribution, expressed in the small intestine. Highest expression levels in the proximal ileum.

The protein resides in the cytoplasm. Functionally, FABPs are thought to play a role in the intracellular transport of long-chain fatty acids and their acyl-CoA esters. FABP2 is probably involved in triglyceride-rich lipoprotein synthesis. Binds saturated long-chain fatty acids with a high affinity, but binds with a lower affinity to unsaturated long-chain fatty acids. FABP2 may also help maintain energy homeostasis by functioning as a lipid sensor. The sequence is that of Fatty acid-binding protein, intestinal (Fabp2) from Mus musculus (Mouse).